The sequence spans 439 residues: Trigger factor (439 aa).

One can recognise a PPIase FKBP-type domain in the interval 175–260 (GDRVTISYRS…VERLSVKDEI (86 aa)).

It belongs to the FKBP-type PPIase family. Tig subfamily.

It is found in the cytoplasm. It catalyses the reaction [protein]-peptidylproline (omega=180) = [protein]-peptidylproline (omega=0). In terms of biological role, involved in protein export. Acts as a chaperone by maintaining the newly synthesized protein in an open conformation. Functions as a peptidyl-prolyl cis-trans isomerase. This is Trigger factor from Anaplasma phagocytophilum (strain HZ).